The following is a 486-amino-acid chain: UDP-N-acetylmuramate--L-alanine ligase (486 aa).

ATP is bound at residue 129–135 (GTHGKTT).

Belongs to the MurCDEF family.

The protein resides in the cytoplasm. The enzyme catalyses UDP-N-acetyl-alpha-D-muramate + L-alanine + ATP = UDP-N-acetyl-alpha-D-muramoyl-L-alanine + ADP + phosphate + H(+). It participates in cell wall biogenesis; peptidoglycan biosynthesis. Functionally, cell wall formation. This chain is UDP-N-acetylmuramate--L-alanine ligase, found in Vibrio vulnificus (strain CMCP6).